A 312-amino-acid polypeptide reads, in one-letter code: DNA-directed RNA polymerase subunit alpha (312 aa).

An alpha N-terminal domain (alpha-NTD) region spans residues 1 to 226 (MIEFEKPIIT…EHLNLFTDLT (226 aa)). The segment at 242–312 (NDEKVLDRTI…DLGLGLKNDK (71 aa)) is alpha C-terminal domain (alpha-CTD).

It belongs to the RNA polymerase alpha chain family. As to quaternary structure, homodimer. The RNAP catalytic core consists of 2 alpha, 1 beta, 1 beta' and 1 omega subunit. When a sigma factor is associated with the core the holoenzyme is formed, which can initiate transcription.

The catalysed reaction is RNA(n) + a ribonucleoside 5'-triphosphate = RNA(n+1) + diphosphate. DNA-dependent RNA polymerase catalyzes the transcription of DNA into RNA using the four ribonucleoside triphosphates as substrates. The chain is DNA-directed RNA polymerase subunit alpha from Streptococcus agalactiae serotype Ia (strain ATCC 27591 / A909 / CDC SS700).